The chain runs to 529 residues: Bifunctional purine biosynthesis protein PurH (529 aa).

Positions 1-148 (MQQRRPVRRA…KNHKDVAIVV (148 aa)) constitute an MGS-like domain. Residue Lys287 is modified to N6-acetyllysine.

This sequence belongs to the PurH family.

The enzyme catalyses (6R)-10-formyltetrahydrofolate + 5-amino-1-(5-phospho-beta-D-ribosyl)imidazole-4-carboxamide = 5-formamido-1-(5-phospho-D-ribosyl)imidazole-4-carboxamide + (6S)-5,6,7,8-tetrahydrofolate. It carries out the reaction IMP + H2O = 5-formamido-1-(5-phospho-D-ribosyl)imidazole-4-carboxamide. The protein operates within purine metabolism; IMP biosynthesis via de novo pathway; 5-formamido-1-(5-phospho-D-ribosyl)imidazole-4-carboxamide from 5-amino-1-(5-phospho-D-ribosyl)imidazole-4-carboxamide (10-formyl THF route): step 1/1. It participates in purine metabolism; IMP biosynthesis via de novo pathway; IMP from 5-formamido-1-(5-phospho-D-ribosyl)imidazole-4-carboxamide: step 1/1. The polypeptide is Bifunctional purine biosynthesis protein PurH (Escherichia coli O17:K52:H18 (strain UMN026 / ExPEC)).